Here is a 235-residue protein sequence, read N- to C-terminus: Elongation factor Tu, chloroplastic (235 aa).

Residues 1–125 (KNMITGAAQM…SVDSYIPTPI (125 aa)) enclose the tr-type G domain. 47–50 (NKED) serves as a coordination point for GTP.

It belongs to the TRAFAC class translation factor GTPase superfamily. Classic translation factor GTPase family. EF-Tu/EF-1A subfamily.

The protein localises to the plastid. It is found in the chloroplast. It carries out the reaction GTP + H2O = GDP + phosphate + H(+). In terms of biological role, GTP hydrolase that promotes the GTP-dependent binding of aminoacyl-tRNA to the A-site of ribosomes during protein biosynthesis. This chain is Elongation factor Tu, chloroplastic (tufA), found in Costaria costata (Five-ribbed kelp).